Reading from the N-terminus, the 265-residue chain is MSRIQKTFAALAAQQKKGLIPFITAGDPAPALTVDLMHALVAGGADVIELGVPFSDPMADGPVIQRASERALAQGVSLTQVLAWVTEFRKTNATTPVVLMGYANPIERMGEETFAKAASAAGVDGVLVVDYPPEECESFAALMRANQMDPIFLLAPTSTDDRIAAVAKVASGYLYYVSLTGVTGSATLDLESVAARLPLIKQHANLPVGVGFGIRDAQTARAIGSVADAVVIGSRLVQLLEDAPREKAVDSLRAFIADIRQALDA.

Active-site proton acceptor residues include glutamate 49 and aspartate 60.

Belongs to the TrpA family. As to quaternary structure, tetramer of two alpha and two beta chains.

The enzyme catalyses (1S,2R)-1-C-(indol-3-yl)glycerol 3-phosphate + L-serine = D-glyceraldehyde 3-phosphate + L-tryptophan + H2O. Its pathway is amino-acid biosynthesis; L-tryptophan biosynthesis; L-tryptophan from chorismate: step 5/5. In terms of biological role, the alpha subunit is responsible for the aldol cleavage of indoleglycerol phosphate to indole and glyceraldehyde 3-phosphate. The sequence is that of Tryptophan synthase alpha chain from Cupriavidus metallidurans (strain ATCC 43123 / DSM 2839 / NBRC 102507 / CH34) (Ralstonia metallidurans).